The following is an 878-amino-acid chain: Phosphoenolpyruvate carboxylase (878 aa).

Catalysis depends on residues histidine 137 and lysine 545.

This sequence belongs to the PEPCase type 1 family. Mg(2+) is required as a cofactor.

It carries out the reaction oxaloacetate + phosphate = phosphoenolpyruvate + hydrogencarbonate. Functionally, forms oxaloacetate, a four-carbon dicarboxylic acid source for the tricarboxylic acid cycle. The chain is Phosphoenolpyruvate carboxylase from Yersinia pseudotuberculosis serotype O:1b (strain IP 31758).